The sequence spans 406 residues: uncharacterized protein (406 aa).

Positions 136-153 (SQKNWGSEKNWNSPSQGP) are enriched in polar residues. The interval 136–157 (SQKNWGSEKNWNSPSQGPASRE) is disordered.

This is an uncharacterized protein from Rattus norvegicus (Rat).